Consider the following 138-residue polypeptide: Acidic phospholipase A2 CH-E6' (138 aa).

A signal peptide spans methionine 1 to glycine 16. Cystine bridges form between cysteine 42/cysteine 131, cysteine 44/cysteine 60, cysteine 59/cysteine 111, cysteine 65/cysteine 138, cysteine 66/cysteine 104, cysteine 73/cysteine 97, and cysteine 91/cysteine 102. 3 residues coordinate Ca(2+): tyrosine 43, glycine 45, and glycine 47. Residue histidine 63 is part of the active site. Aspartate 64 lines the Ca(2+) pocket. The active site involves aspartate 105.

Belongs to the phospholipase A2 family. Group II subfamily. D49 sub-subfamily. It depends on Ca(2+) as a cofactor. In terms of tissue distribution, expressed by the venom gland.

The protein resides in the secreted. It carries out the reaction a 1,2-diacyl-sn-glycero-3-phosphocholine + H2O = a 1-acyl-sn-glycero-3-phosphocholine + a fatty acid + H(+). In terms of biological role, snake venom phospholipase A2 (PLA2) that shows high lipolytic and weak ADP-induced platelet aggregation activities. Also shows weak anticoagulant activity. PLA2 catalyzes the calcium-dependent hydrolysis of the 2-acyl groups in 3-sn-phosphoglycerides. The protein is Acidic phospholipase A2 CH-E6' of Crotalus horridus (Timber rattlesnake).